We begin with the raw amino-acid sequence, 307 residues long: MSQFNNTNIIENTPINKMHQKKSNILDIFTLDNIRTNHSSDKVFFKITSDKPLSTDKLGQHFDNTYHTGLNICSIPFETKGSCVDGGIYFTDKDNILKFLFYGIYLRKVDLPLDDPGFIMVKDPDSCASSVKWRASRVILGNRLNLRDISTFKYLMSLGVDINVDNDKPLRWAASRGYYGLVKFLLDNGANVHAYDDEAVQLASRNGYLNVVKILVEYGANVNANNDYAIQMACKYGYNEIVRFLVFNGANPMANRYYPIEIATEFGNKLIVRFLLHQDKSMVYKSYAMDIAVRNENWDLLNVLLLD.

ANK repeat units lie at residues 135–164, 165–194, 196–224, 226–254, 256–284, and 286–307; these read ASRV…DINV, DNDK…NVHA, DDEA…NVNA, NDYA…NPMA, RYYP…SMVY, and SYAM…LLLD.

This Acanthamoeba polyphaga (Amoeba) protein is Putative ankyrin repeat protein R229.